Consider the following 110-residue polypeptide: Putative zinc finger protein ORF110 (110 aa).

Residues 3 to 26 form a C2H2-type zinc finger; the sequence is YVCTACKLKFHTFEEFKIHVHLFH.

This chain is Putative zinc finger protein ORF110, found in Acidianus filamentous virus 1 (isolate United States/Yellowstone) (AFV-1).